Here is a 450-residue protein sequence, read N- to C-terminus: tRNA-2-methylthio-N(6)-dimethylallyladenosine synthase (450 aa).

One can recognise an MTTase N-terminal domain in the interval 8 to 124; it reads RTLHITTWGC…LPELIAEIEA (117 aa). The [4Fe-4S] cluster site is built by Cys17, Cys52, Cys87, Cys162, Cys166, and Cys169. In terms of domain architecture, Radical SAM core spans 148-380; that stretch reads ASQGPIAFLA…QAVLRDQQHA (233 aa). In terms of domain architecture, TRAM spans 383 to 445; sequence RAQVGRSFEV…PNSLMASLTQ (63 aa).

Belongs to the methylthiotransferase family. MiaB subfamily. In terms of assembly, monomer. [4Fe-4S] cluster is required as a cofactor.

It is found in the cytoplasm. It carries out the reaction N(6)-dimethylallyladenosine(37) in tRNA + (sulfur carrier)-SH + AH2 + 2 S-adenosyl-L-methionine = 2-methylsulfanyl-N(6)-dimethylallyladenosine(37) in tRNA + (sulfur carrier)-H + 5'-deoxyadenosine + L-methionine + A + S-adenosyl-L-homocysteine + 2 H(+). In terms of biological role, catalyzes the methylthiolation of N6-(dimethylallyl)adenosine (i(6)A), leading to the formation of 2-methylthio-N6-(dimethylallyl)adenosine (ms(2)i(6)A) at position 37 in tRNAs that read codons beginning with uridine. The polypeptide is tRNA-2-methylthio-N(6)-dimethylallyladenosine synthase (Acidiphilium cryptum (strain JF-5)).